The primary structure comprises 259 residues: UBX domain-containing protein 2A (259 aa).

The required for interaction with CHRNA3 stretch occupies residues 1 to 151; it reads MKDVDNLKSI…SATPKIVSKA (151 aa). Residues 1–164 are required for inhibition of CHRNA3 ubiquitination and translocation of CHRNA3 to the plasma membrane resulting in an increase in acetylcholine-gated nicotinic acetylcholine receptor currents; that stretch reads MKDVDNLKSI…EVENKNNLSA (164 aa). Positions 60-124 constitute an SEP domain; it reads QVDVNIKLWK…VEDKKNEICL (65 aa). A required for interaction with VCP region spans residues 167 to 259; sequence LNNLEPITNI…TASFRELSEH (93 aa). A UBX domain is found at 169–246; the sequence is NLEPITNIQI…DLQNAVIIQR (78 aa).

Part of a complex composed of STUB1/CHIP, VCP/p97, CHRNA3, and UBXN2A that modulates the ubiquitination and endoplasmic reticulum-associated degradation (ERAD) of CHRNA3. Within the complex UBXN2A acts as a scaffold protein required for the interaction of CHRNA3 with VCP/p97, this interaction also inhibits CHRNA3 ubiquitination by STUB1/CHIP and subsequently ERAD. Interacts (via SEP domain) with CHRNA3 and interacts (via UBX domain) with VCP/P97; these interactions are required for the interaction of CHRNA3 with the STUB1-VCP-UBXN2A complex. Interacts with HSPA9/MOT-2 (via SBD domain); the interaction inhibits HSPA9/MOT-2 interaction with and degradation of p53, thereby promotes p53 translocation to the nucleus. Interacts with RICTOR. Post-translationally, ubiquitinated. In terms of tissue distribution, expressed in the colon (at protein level).

The protein resides in the golgi apparatus. It is found in the endoplasmic reticulum. Its subcellular location is the perikaryon. The protein localises to the cell projection. It localises to the dendrite. The protein resides in the nucleus. It is found in the cytoplasm. In terms of biological role, acts to repress the ubiquitination and subsequent endoplasmic reticulum-associated degradation of CHRNA3 by the STUB1-VCP-UBXN2A complex in cortical neurons. Also acts to promote the translocation of CHRNA3 to the plasma membrane and subsequently increases plasma membrane acetylcholine-gated ion-channel activation. Plays a role in the inhibition of STUB1-mediated TP53 degradation, via its interaction with HSPA9 which acts to inhibit TP53 binding to HSPA9. Positively mediates the ubiquitination and proteosomal degradation of RICTOR, may thereby act as a negative regulator of the mTORC2 pathway. The chain is UBX domain-containing protein 2A from Homo sapiens (Human).